Reading from the N-terminus, the 432-residue chain is Gamma-glutamyl phosphate reductase (432 aa).

This sequence belongs to the gamma-glutamyl phosphate reductase family.

It is found in the cytoplasm. It catalyses the reaction L-glutamate 5-semialdehyde + phosphate + NADP(+) = L-glutamyl 5-phosphate + NADPH + H(+). It participates in amino-acid biosynthesis; L-proline biosynthesis; L-glutamate 5-semialdehyde from L-glutamate: step 2/2. In terms of biological role, catalyzes the NADPH-dependent reduction of L-glutamate 5-phosphate into L-glutamate 5-semialdehyde and phosphate. The product spontaneously undergoes cyclization to form 1-pyrroline-5-carboxylate. The sequence is that of Gamma-glutamyl phosphate reductase from Psychrobacter sp. (strain PRwf-1).